Consider the following 524-residue polypeptide: MQSVQGTQAMSDPTAVRPADKRAFLKWAVLGAVGIVNGYATILMYSRGEVAFALLTLILTTLALYIFGSRKTYAHRYIYPGIAGMILFILFPLAYTVGLAFTNYSAKNQLTLERAQSVLMDQTFQSGESYAFQLYKTEQGYRLLIEDGDERLATAPFSLSGNVPTDLNLEVIGGIDGEVEPIKTIIGYRTELSGIDLHFPDGEDIRMSGLRKFAAVKPLYTLQDDGETLTNNQSGQVLRPNMEIGFYQPINESGEFVGERVSPGFVVSIGTHNFERVWKDEGIKEPFINIFIWTVIFSVLTVIFTLMIGLVLASVVQWEALKGRAVYRVLLILPYAVPAFISILIFRGLFNQSFGEINMVLNGLFGLSPAWFSDPLLAKTMVLIVNTWLGFPYMMIFCMGLLKAIPDDLYEASAIDGANFIHNFTKITLPMMIKPLTPLLIASFAFNFNNFVMIQLLTQGGPNRIGTSEPAGYTDLLVSYTYRIAFEGTGGQDFGLASAIATLIFLLVGALALLNLRFTKLSQQ.

Residues 1–22 (MQSVQGTQAMSDPTAVRPADKR) are Cytoplasmic-facing. A helical transmembrane segment spans residues 23–45 (AFLKWAVLGAVGIVNGYATILMY). The Periplasmic segment spans residues 46 to 49 (SRGE). The chain crosses the membrane as a helical span at residues 50-69 (VAFALLTLILTTLALYIFGS). Over 70 to 81 (RKTYAHRYIYPG) the chain is Cytoplasmic. A helical transmembrane segment spans residues 82 to 104 (IAGMILFILFPLAYTVGLAFTNY). The Periplasmic segment spans residues 105–289 (SAKNQLTLER…DEGIKEPFIN (185 aa)). The chain crosses the membrane as a helical span at residues 290–312 (IFIWTVIFSVLTVIFTLMIGLVL). In terms of domain architecture, ABC transmembrane type-1 spans 291 to 515 (FIWTVIFSVL…LLVGALALLN (225 aa)). The Cytoplasmic segment spans residues 313-324 (ASVVQWEALKGR). Residues 325–347 (AVYRVLLILPYAVPAFISILIFR) form a helical membrane-spanning segment. Topologically, residues 348 to 379 (GLFNQSFGEINMVLNGLFGLSPAWFSDPLLAK) are periplasmic. Residues 380–402 (TMVLIVNTWLGFPYMMIFCMGLL) form a helical membrane-spanning segment. The Cytoplasmic portion of the chain corresponds to 403–435 (KAIPDDLYEASAIDGANFIHNFTKITLPMMIKP). The chain crosses the membrane as a helical span at residues 436–458 (LTPLLIASFAFNFNNFVMIQLLT). Over 459–493 (QGGPNRIGTSEPAGYTDLLVSYTYRIAFEGTGGQD) the chain is Periplasmic. A helical membrane pass occupies residues 494 to 516 (FGLASAIATLIFLLVGALALLNL). Residues 517–524 (RFTKLSQQ) are Cytoplasmic-facing.

This sequence belongs to the binding-protein-dependent transport system permease family. MalFG subfamily. In terms of assembly, the complex is composed of two ATP-binding proteins (MalK), two transmembrane proteins (MalG and MalF) and a solute-binding protein (MalE).

It localises to the cell inner membrane. Its function is as follows. Part of the ABC transporter complex MalEFGK involved in maltose/maltodextrin import. Probably responsible for the translocation of the substrate across the membrane. The chain is Maltose/maltodextrin transport system permease protein MalF (malF) from Vibrio cholerae serotype O1 (strain ATCC 39315 / El Tor Inaba N16961).